A 147-amino-acid polypeptide reads, in one-letter code: Hemoglobin subunit beta (147 aa).

Val-2 carries the N-acetylvaline modification. The Globin domain occupies 3 to 147; sequence HLSAEEKEAV…VANALAHKYH (145 aa). A Phosphoserine modification is found at Ser-45. An N6-acetyllysine modification is found at Lys-60. His-64 serves as a coordination point for heme b. Lys-83 is modified (N6-acetyllysine). A heme b-binding site is contributed by His-93. Position 94 is an S-nitrosocysteine (Cys-94). N6-acetyllysine is present on Lys-145.

This sequence belongs to the globin family. In terms of assembly, heterotetramer of two alpha chains and two beta chains. In terms of tissue distribution, red blood cells.

Involved in oxygen transport from the lung to the various peripheral tissues. This Sus scrofa (Pig) protein is Hemoglobin subunit beta (HBB).